Here is a 347-residue protein sequence, read N- to C-terminus: MRGDSERIAVGVVGTGGMGGMHAENLHFRVPGARLVAVADLDTRRAGGVAERSGAEVFEDGFDLIRSDRVEAVVIASPDPTHAPLVLECLKNEKPVLCEKPLADSADAARKVVEAEVELGRKLVQVGFMRRYDPQHVAVKEAVASGAVGAPVLFRGWHRNADIEPGITSEWVVINATIHDIDSARWFIEEEIEEVYVRGMNTAPKLGANVWDLQLIQFTTAGGRLGSIETNVVSGYGYEVGVEIVGERGTVQVPPLSGAIVRRGFAASQRIEDGWLARFHAAYVIEMQGWVGALLRGEAPAGPDAWDGYASLVVADACIASLRSGAPQKVETLEPPTLYRRDVEVTG.

This sequence belongs to the Gfo/Idh/MocA family. Homotetramer.

It catalyses the reaction myo-inositol + NAD(+) = scyllo-inosose + NADH + H(+). Functionally, involved in the oxidation of myo-inositol (MI) to 2-keto-myo-inositol (2KMI or 2-inosose). This is Inositol 2-dehydrogenase from Rubrobacter xylanophilus (strain DSM 9941 / JCM 11954 / NBRC 16129 / PRD-1).